The primary structure comprises 452 residues: Glutamyl-tRNA(Gln) amidotransferase subunit A (452 aa).

Residues K56 and S131 each act as charge relay system in the active site. Residue S155 is the Acyl-ester intermediate of the active site.

Belongs to the amidase family. GatA subfamily. Heterotrimer of A, B and C subunits.

The catalysed reaction is L-glutamyl-tRNA(Gln) + L-glutamine + ATP + H2O = L-glutaminyl-tRNA(Gln) + L-glutamate + ADP + phosphate + H(+). In terms of biological role, allows the formation of correctly charged Gln-tRNA(Gln) through the transamidation of misacylated Glu-tRNA(Gln) in organisms which lack glutaminyl-tRNA synthetase. The reaction takes place in the presence of glutamine and ATP through an activated gamma-phospho-Glu-tRNA(Gln). The sequence is that of Glutamyl-tRNA(Gln) amidotransferase subunit A from Campylobacter concisus (strain 13826).